The following is a 2061-amino-acid chain: Myoferlin (2061 aa).

Residues 1 to 101 enclose the C2 1 domain; sequence MLRVIVESAS…TGDQSRSLPY (101 aa). Over 1 to 2025 the chain is Cytoplasmic; that stretch reads MLRVIVESAS…MKFIVWRRFK (2025 aa). Residues 123–172 are disordered; that stretch reads GYDPPSAPHPNDLSGPSVPGMGGDGEEDEGDEDRLDNAVRGPGPKGPVGT. The segment covering 146–156 has biased composition (acidic residues); it reads DGEEDEGDEDR. Serine 174 carries the phosphoserine modification. 2 consecutive C2 domains span residues 181–300 and 339–474; these read RLTK…RKWL and DSDD…VEDF. Residues 186–281 are necessary for interaction with EHD2; it reads KNSRRMLSNK…RADCLMGEFK (96 aa). The interval 323-342 is disordered; that stretch reads LGTGDEPPPERRDRDNDSDD. Ca(2+)-binding residues include aspartate 390, aspartate 396, aspartate 444, aspartate 446, and aspartate 452. Residue lysine 553 is modified to N6-acetyllysine. At serine 729 the chain carries Phosphoserine. Residue lysine 884 is modified to N6-acetyllysine. The segment at 938 to 967 is disordered; the sequence is ESRYPGGDWKPAEDTYTDANGDKAASPSEL. C2 domains are found at residues 1123 to 1251 and 1282 to 1410; these read GANT…LLWH and LPPQ…GKED. Residues aspartate 1155, aspartate 1161, aspartate 1217, and aspartate 1219 each coordinate Ca(2+). The residue at position 1507 (lysine 1507) is an N6-acetyllysine. C2 domains lie at 1536–1654 and 1772–1920; these read PAPP…SHCG and GPPG…EKCR. Residues aspartate 1569, aspartate 1575, aspartate 1624, aspartate 1626, aspartate 1891, serine 1894, and aspartate 1897 each coordinate Ca(2+). At serine 1915 the chain carries Phosphoserine. The helical transmembrane segment at 2026-2046 threads the bilayer; that stretch reads WVIIGLLFLLILLLFVAVLLY. Residues 2047–2061 lie on the Extracellular side of the membrane; it reads SLPNYLSMKIVKPNV.

This sequence belongs to the ferlin family. In terms of assembly, interacts with DNM2 and KDR. Interacts with EHD1. Interacts with EHD2; the interaction is direct. Interacts with RIPOR2. Ca(2+) serves as cofactor. In terms of tissue distribution, expressed in myoblast and endothelial cells (at protein level). Highly expressed in cardiac and skeletal muscles. Also present in lung, and at very low levels in kidney, placenta and brain.

The protein localises to the cell membrane. It is found in the nucleus membrane. Its subcellular location is the cytoplasmic vesicle membrane. Its function is as follows. Calcium/phospholipid-binding protein that plays a role in the plasmalemma repair mechanism of endothelial cells that permits rapid resealing of membranes disrupted by mechanical stress. Involved in endocytic recycling. Implicated in VEGF signal transduction by regulating the levels of the receptor KDR. The polypeptide is Myoferlin (MYOF) (Homo sapiens (Human)).